Consider the following 132-residue polypeptide: UPF0212 protein PYRAB08340 (132 aa).

It belongs to the UPF0212 family.

The chain is UPF0212 protein PYRAB08340 from Pyrococcus abyssi (strain GE5 / Orsay).